The chain runs to 377 residues: tRNA-specific 2-thiouridylase MnmA (377 aa).

ATP contacts are provided by residues 8 to 15 (GMSGGVDS) and methionine 34. Positions 94 to 96 (NPD) are interaction with target base in tRNA. Cysteine 99 (nucleophile) is an active-site residue. Residues cysteine 99 and cysteine 201 are joined by a disulfide bond. Residue glycine 123 coordinates ATP. Residues 151-153 (KDQ) form an interaction with tRNA region. The active-site Cysteine persulfide intermediate is cysteine 201. An interaction with tRNA region spans residues 315–316 (RY).

The protein belongs to the MnmA/TRMU family.

It localises to the cytoplasm. It carries out the reaction S-sulfanyl-L-cysteinyl-[protein] + uridine(34) in tRNA + AH2 + ATP = 2-thiouridine(34) in tRNA + L-cysteinyl-[protein] + A + AMP + diphosphate + H(+). Catalyzes the 2-thiolation of uridine at the wobble position (U34) of tRNA, leading to the formation of s(2)U34. In Acinetobacter baumannii (strain AB307-0294), this protein is tRNA-specific 2-thiouridylase MnmA.